The following is a 119-amino-acid chain: Large ribosomal subunit protein uL22 (119 aa).

Belongs to the universal ribosomal protein uL22 family. In terms of assembly, part of the 50S ribosomal subunit.

This protein binds specifically to 23S rRNA; its binding is stimulated by other ribosomal proteins, e.g. L4, L17, and L20. It is important during the early stages of 50S assembly. It makes multiple contacts with different domains of the 23S rRNA in the assembled 50S subunit and ribosome. Its function is as follows. The globular domain of the protein is located near the polypeptide exit tunnel on the outside of the subunit, while an extended beta-hairpin is found that lines the wall of the exit tunnel in the center of the 70S ribosome. The chain is Large ribosomal subunit protein uL22 from Rickettsia bellii (strain OSU 85-389).